A 36-amino-acid polypeptide reads, in one-letter code: Glucagon (36 aa).

This sequence belongs to the glucagon family. In terms of tissue distribution, produced by the X-cells of the islets of pancreas.

It is found in the secreted. Functionally, promotes hydrolysis of glycogen and lipids, and raises the blood sugar level. The polypeptide is Glucagon (gcg) (Hydrolagus colliei (Spotted ratfish)).